The following is an 889-amino-acid chain: Cytoplasmic aconitate hydratase (889 aa).

Substrate-binding positions include Gln-86 and 205 to 207 (DSH). [4Fe-4S] cluster contacts are provided by Cys-437, Cys-503, and Cys-506. Substrate contacts are provided by residues Arg-536, Arg-541, Arg-699, and 779 to 780 (SR).

This sequence belongs to the aconitase/IPM isomerase family. Interacts (when associated with the 4Fe-4S) with FBXL5. Interacts with frataxin(81-210). The cofactor is [4Fe-4S] cluster.

Its subcellular location is the cytoplasm. The protein localises to the cytosol. It catalyses the reaction citrate = D-threo-isocitrate. Its function is as follows. Bifunctional iron sensor that switches between 2 activities depending on iron availability. Iron deprivation, promotes its mRNA binding activity through which it regulates the expression of genes involved in iron uptake, sequestration and utilization. Binds to iron-responsive elements (IRES) in the untranslated region of target mRNAs preventing for instance the translation of ferritin and aminolevulinic acid synthase and stabilizing the transferrin receptor mRNA. In terms of biological role, conversely, when cellular iron levels are high, binds a 4Fe-4S cluster which precludes RNA binding activity and promotes the aconitase activity, the isomerization of citrate to isocitrate via cis-aconitate. The polypeptide is Cytoplasmic aconitate hydratase (Aco1) (Mus musculus (Mouse)).